The sequence spans 88 residues: Bombyxin B-8 (88 aa).

Residues 1–18 (MKTSVIFVLIVLNLMWSG) form the signal peptide. Intrachain disulfides connect C28/C74, C40/C87, and C73/C78. A propeptide spans 47–65 (GGAQYAPYFWQKAYLGSRG) (c peptide like).

Belongs to the insulin family. Heterodimer of a B chain and an A chain linked by two disulfide bonds.

It localises to the secreted. Brain peptide responsible for activation of prothoracic glands to produce ecdysone in insects. The polypeptide is Bombyxin B-8 (BBXB8) (Bombyx mori (Silk moth)).